Consider the following 129-residue polypeptide: Follitropin subunit beta (129 aa).

The N-terminal stretch at 1–18 (MKSVQFCFLFCCWRAICC) is a signal peptide. Cystine bridges form between Cys-21–Cys-69, Cys-35–Cys-84, Cys-38–Cys-122, Cys-46–Cys-100, Cys-50–Cys-102, and Cys-105–Cys-112. Residues Asn-25 and Asn-42 are each glycosylated (N-linked (GlcNAc...) asparagine).

It belongs to the glycoprotein hormones subunit beta family. In terms of assembly, heterodimer. The active follitropin is a heterodimer composed of an alpha chain/CGA shared with other hormones and a unique beta chain/FSHB shown here.

It localises to the secreted. Together with the alpha chain CGA constitutes follitropin, the follicle-stimulating hormone, and provides its biological specificity to the hormone heterodimer. Binds FSHR, a G protein-coupled receptor, on target cells to activate downstream signaling pathways. Follitropin is involved in follicle development and spermatogenesis in reproductive organs. The chain is Follitropin subunit beta (FSHB) from Capra hircus (Goat).